Here is a 460-residue protein sequence, read N- to C-terminus: MATMIRGHRLRIAEGDIPIAGVKSSRIYSDISPFKKASDLMIHWNEFVFKVMPEDIAGDGFRLASIPVIPSSEVQAVLRKRESTNYVHWGALSISIDALFRKNAGVSGWCYVYDNRWETFEQAMLQKFHFNLDSGSATLVTSPNFPVSLDDPGLSNSISVAVMFENLNFKFESYPISVRVGNMCRFFDSFLSSVKNKVDSNFLLEASNADPLGVGAFGFEQDDQVSELFNYIQTVPTQAIKFREHEIPKGFLGMMGKKKIKSFEFASGSKGMERRKPNRGKQIDRSFSQRAVPGFRSQNEKVEHQGLSTDSDFENFLRNKRGNKAGVKSTASEGSSVDNISSREFQFARQNQAKEDGSSSEFAAQGGRKSKGISGRRKQTSSWKDRGNPGTDTGVHLREHSDPGNVRADGVSGPSGGSEINGGSISPRVLQPEGSGQLDQSFQDYLFGPEHQQNDIPSGL.

Disordered stretches follow at residues 267–314 (SGSK…SDFE) and 349–460 (RQNQ…PSGL). Residues 368 to 379 (RKSKGISGRRKQ) show a composition bias toward basic residues.

The protein belongs to the tobamoviruses movement protein family.

Its function is as follows. Suppressor of viral-induced RNA silencing. This chain is Putative movement protein, found in Crataegus (hawthorn).